The following is a 387-amino-acid chain: Bifunctional chorismate mutase/prephenate dehydratase (387 aa).

A Chorismate mutase domain is found at 1–92 (MNPDNPLLAL…DSVLTQQALL (92 aa)). The substrate site is built by Arg11, Arg28, Lys39, Asp48, Glu52, Ser84, and Gln88. Residues 105–285 (RIAFLGPKGS…NHTRFIVLAR (181 aa)) form the Prephenate dehydratase domain. An ACT domain is found at 299–376 (TLIMATGQQA…RSLKVLGCYP (78 aa)).

It is found in the cytoplasm. It catalyses the reaction chorismate = prephenate. The enzyme catalyses prephenate + H(+) = 3-phenylpyruvate + CO2 + H2O. Its pathway is amino-acid biosynthesis; L-phenylalanine biosynthesis; phenylpyruvate from prephenate: step 1/1. It participates in metabolic intermediate biosynthesis; prephenate biosynthesis; prephenate from chorismate: step 1/1. Catalyzes the Claisen rearrangement of chorismate to prephenate and the decarboxylation/dehydration of prephenate to phenylpyruvate. This is Bifunctional chorismate mutase/prephenate dehydratase (pheA) from Enterobacter agglomerans (Erwinia herbicola).